Reading from the N-terminus, the 257-residue chain is UPF0246 protein Ping_3037 (257 aa).

Belongs to the UPF0246 family.

In Psychromonas ingrahamii (strain DSM 17664 / CCUG 51855 / 37), this protein is UPF0246 protein Ping_3037.